The following is a 428-amino-acid chain: MAKGGSLYIVGIFLPIWTFMIYIFGKELFLIRKYQKIDSTYTALSQRVKEQYDTSRRRNYFPKVKLSRNSYDDYTLNYTRQNDSDSFHLRENATILMLVRNSELEGALDSMRSLEDRFNNKYHYDWTFLNDVPFDQDFIEATTSMASGKTQYALIPPEDWNRPQWINDTLFEERLRVMEDEGVLYGGSKSYRNMCRFNSGFFFRQSILDNYDYYFRVEPNVKYYCDFPYDPFRVMRLKGKKYGFVISLYEYEETIPTLWDAVEEYLVASEETILRKEDSAYAFLTDSGLVGKHYPVVEANSDYNLCHFWSNFEIGDLNFFRSDEYKHFFETLDAKGGFYYERWGDAPVHSIGVSLLLRPDEIIHFDELGYFHSPFGTCPASYAVRLDQRCRCKSDDESVIDITPHSCLMRWWKNGSGKYFLKEEQDEI.

Residues 1–3 (MAK) are Cytoplasmic-facing. Residues 4–24 (GGSLYIVGIFLPIWTFMIYIF) traverse the membrane as a helical; Signal-anchor for type II membrane protein segment. Residues 25–88 (GKELFLIRKY…TRQNDSDSFH (64 aa)) are stem region. At 25 to 428 (GKELFLIRKY…YFLKEEQDEI (404 aa)) the chain is on the lumenal side. Residues asparagine 77, asparagine 82, asparagine 92, and asparagine 167 are each glycosylated (N-linked (GlcNAc...) asparagine). The segment at 89 to 428 (LRENATILML…YFLKEEQDEI (340 aa)) is catalytic. Catalysis depends on glutamate 313, which acts as the Nucleophile. An N-linked (GlcNAc...) asparagine glycan is attached at asparagine 414.

It belongs to the glycosyltransferase 15 family.

It localises to the golgi apparatus membrane. It functions in the pathway protein modification; protein glycosylation. Functionally, possible glycosyltransferase involved in N-linked glycosylation. Transfers an alpha-D-mannosyl residue from GDP-mannose into lipid-linked oligosaccharide, forming an alpha-(1-&gt;2)-D-mannosyl-D-mannose linkage. In Saccharomyces cerevisiae (strain ATCC 204508 / S288c) (Baker's yeast), this protein is Probable mannosyltransferase YUR1 (YUR1).